The primary structure comprises 227 residues: ATP-dependent dethiobiotin synthetase BioD (227 aa).

13–18 contributes to the ATP binding site; that stretch reads DIGKTY. Residue T17 participates in Mg(2+) binding. Residue K38 is part of the active site. S42 contacts substrate. ATP is bound by residues D55, 116–119, and 179–180; these read EGSG and NN. Residues D55 and E116 each contribute to the Mg(2+) site.

The protein belongs to the dethiobiotin synthetase family. Homodimer. Mg(2+) is required as a cofactor.

Its subcellular location is the cytoplasm. The catalysed reaction is (7R,8S)-7,8-diammoniononanoate + CO2 + ATP = (4R,5S)-dethiobiotin + ADP + phosphate + 3 H(+). It functions in the pathway cofactor biosynthesis; biotin biosynthesis; biotin from 7,8-diaminononanoate: step 1/2. Its function is as follows. Catalyzes a mechanistically unusual reaction, the ATP-dependent insertion of CO2 between the N7 and N8 nitrogen atoms of 7,8-diaminopelargonic acid (DAPA, also called 7,8-diammoniononanoate) to form a ureido ring. The protein is ATP-dependent dethiobiotin synthetase BioD of Clostridium botulinum (strain 657 / Type Ba4).